The following is a 1392-amino-acid chain: ATP-dependent helicase/nuclease subunit A (1392 aa).

Residues Asn3 to Arg489 enclose the UvrD-like helicase ATP-binding domain. ATP is bound at residue Ala24–Thr31. 3 disordered regions span residues Arg291 to Asp319, Lys555 to Ala594, and Gly1051 to Lys1126. 2 stretches are compositionally biased toward basic and acidic residues: residues Glu305–Asp319 and Ser567–Glu583. The region spanning Arg556–Gly886 is the UvrD-like helicase C-terminal domain. Residues Ser584–Ala594 are compositionally biased toward acidic residues. The span at Ala1088–Leu1113 shows a compositional bias: basic and acidic residues.

This sequence belongs to the helicase family. AddA subfamily. In terms of assembly, heterodimer of AddA and AddB/RexB. It depends on Mg(2+) as a cofactor.

The catalysed reaction is Couples ATP hydrolysis with the unwinding of duplex DNA by translocating in the 3'-5' direction.. It carries out the reaction ATP + H2O = ADP + phosphate + H(+). The heterodimer acts as both an ATP-dependent DNA helicase and an ATP-dependent, dual-direction single-stranded exonuclease. Recognizes the chi site generating a DNA molecule suitable for the initiation of homologous recombination. The AddA nuclease domain is required for chi fragment generation; this subunit has the helicase and 3' -&gt; 5' nuclease activities. The sequence is that of ATP-dependent helicase/nuclease subunit A from Desulfitobacterium hafniense (strain DSM 10664 / DCB-2).